The chain runs to 205 residues: High frequency lysogenization protein HflD homolog (205 aa).

Belongs to the HflD family.

Its subcellular location is the cytoplasm. It is found in the cell inner membrane. In Shewanella sp. (strain W3-18-1), this protein is High frequency lysogenization protein HflD homolog.